The following is a 450-amino-acid chain: Deoxyguanosinetriphosphate triphosphohydrolase-like protein (450 aa).

One can recognise an HD domain in the interval 61 to 274 (RLTHSLEVAQ…MELADDIAYA (214 aa)).

This sequence belongs to the dGTPase family. Type 2 subfamily.

The protein is Deoxyguanosinetriphosphate triphosphohydrolase-like protein of Histophilus somni (strain 2336) (Haemophilus somnus).